A 341-amino-acid polypeptide reads, in one-letter code: Enduracididine beta-hydroxylase (341 aa).

2 residues coordinate Fe cation: His-146 and Glu-148. The tract at residues 203 to 223 is disordered; the sequence is HRIHGKAPGDESARESALRER. His-300 serves as a coordination point for Fe cation.

It belongs to the clavaminate synthase family. Fe(2+) is required as a cofactor.

It catalyses the reaction L-enduracididine + 2-oxoglutarate + O2 = (3S)-3-hydroxy-L-enduracididine + succinate + CO2. It participates in antibiotic biosynthesis. Functionally, hydroxylates the beta carbon of free L-enduracididine to produce (3S)-3-hydroxy-L-enduracididine in biosynthesis of the nonproteinogenic amino acid beta-hydroxyenduracididine, a component of antibiotic mannopeptimycin. This is Enduracididine beta-hydroxylase (mppO) from Streptomyces hygroscopicus.